A 253-amino-acid chain; its full sequence is Triosephosphate isomerase, cytosolic (253 aa).

Positions 10 and 12 each coordinate substrate. His-96 serves as the catalytic Electrophile. Glu-166 serves as the catalytic Proton acceptor.

Belongs to the triosephosphate isomerase family. In terms of assembly, homodimer.

Its subcellular location is the cytoplasm. It carries out the reaction D-glyceraldehyde 3-phosphate = dihydroxyacetone phosphate. It participates in carbohydrate biosynthesis; gluconeogenesis. Its pathway is carbohydrate degradation; glycolysis; D-glyceraldehyde 3-phosphate from glycerone phosphate: step 1/1. The polypeptide is Triosephosphate isomerase, cytosolic (Zea mays (Maize)).